We begin with the raw amino-acid sequence, 1378 residues long: DNA-directed RNA polymerase subunit beta (1378 aa).

This sequence belongs to the RNA polymerase beta chain family. In terms of assembly, the RNAP catalytic core consists of 2 alpha, 1 beta, 1 beta' and 1 omega subunit. When a sigma factor is associated with the core the holoenzyme is formed, which can initiate transcription.

The enzyme catalyses RNA(n) + a ribonucleoside 5'-triphosphate = RNA(n+1) + diphosphate. DNA-dependent RNA polymerase catalyzes the transcription of DNA into RNA using the four ribonucleoside triphosphates as substrates. This is DNA-directed RNA polymerase subunit beta from Dinoroseobacter shibae (strain DSM 16493 / NCIMB 14021 / DFL 12).